The primary structure comprises 286 residues: 33 kDa chaperonin (286 aa).

Cystine bridges form between Cys-233-Cys-235 and Cys-267-Cys-270.

The protein belongs to the HSP33 family. In terms of processing, under oxidizing conditions two disulfide bonds are formed involving the reactive cysteines. Under reducing conditions zinc is bound to the reactive cysteines and the protein is inactive.

It localises to the cytoplasm. In terms of biological role, redox regulated molecular chaperone. Protects both thermally unfolding and oxidatively damaged proteins from irreversible aggregation. Plays an important role in the bacterial defense system toward oxidative stress. The sequence is that of 33 kDa chaperonin from Histophilus somni (strain 2336) (Haemophilus somnus).